A 208-amino-acid chain; its full sequence is MSVRFQSDDEYMRNLITTSGISIGTQVKTKFMKQFISDTDPTGTYTLDLEATQGRIKAAAQFIEHTGASELIVCSGKDSARVPIRKFAELVGCKDIHKRFMPGTLTNPDLPKYMEPKLLLVCDPQVDAQAVTEATNAGIPVIGIANSDNVTSRLDVIIPANNRGRGALAAIFWLLAREVLVIRGEVDETKPMKYEIDDFETKDVREDE.

This sequence belongs to the universal ribosomal protein uS2 family.

The polypeptide is Small ribosomal subunit protein uS2 (Cenarchaeum symbiosum (strain A)).